Here is a 183-residue protein sequence, read N- to C-terminus: TATA-box-binding protein (183 aa).

2 consecutive repeat copies span residues 8–84 (IENV…VKML) and 99–177 (VQNI…SEEL).

This sequence belongs to the TBP family.

Functionally, general factor that plays a role in the activation of archaeal genes transcribed by RNA polymerase. Binds specifically to the TATA box promoter element which lies close to the position of transcription initiation. This chain is TATA-box-binding protein (tbp), found in Archaeoglobus fulgidus (strain ATCC 49558 / DSM 4304 / JCM 9628 / NBRC 100126 / VC-16).